The primary structure comprises 151 residues: Mini-ribonuclease 3 (151 aa).

Asp28 is a catalytic residue.

The protein belongs to the MrnC RNase family. In terms of assembly, homodimer. It depends on Mg(2+) as a cofactor.

The protein localises to the cytoplasm. Its function is as follows. Involved in correct processing of both the 5' and 3' ends of 23S rRNA precursor. Processes 30S rRNA precursor transcript even in absence of ribonuclease 3 (Rnc); Rnc processes 30S rRNA into smaller rRNA precursors. In Clostridium tetani (strain Massachusetts / E88), this protein is Mini-ribonuclease 3.